Reading from the N-terminus, the 754-residue chain is Polycomb protein mes-3 (754 aa).

Residues 1-83 (MTPATAEVKV…PTKLENIQKT (83 aa)) form a disordered region. The span at 31–40 (ARREEEKENL) shows a compositional bias: basic and acidic residues. Low complexity predominate over residues 51–61 (SSEAGSSRESS).

In terms of assembly, forms a heterotrimeric complex with the Polycomb proteins mes-2 and mes-3. Does not interact with mes-4. Interacts with nyfa-1. In adults, it is predominantly expressed in the germline, and weakly expressed in intestinal cells.

The protein resides in the nucleus. Its function is as follows. Component of a Polycomb group (PcG) complex. PcG proteins act by forming multiprotein complexes, which are required to maintain the transcriptionally repressive state of homeotic genes throughout development. In association with the nfya-1-NF-Y complex, may play a role in repressing the expression of the homeobox protein egl-5 in tissues such as the head. PcG proteins are not required to initiate repression, but to maintain it during later stages of development. The mes-2/mes-3/mes-6 complex may participate in the global inactivation of the X chromosomes in germline cells. The complex may act via methylation of histone H3 'Lys-27', rendering chromatin heritably changed in its expressibility. This complex is required to exclude mes-4 from the inactivated X-chromosomes in germline cells. This Caenorhabditis elegans protein is Polycomb protein mes-3.